A 638-amino-acid chain; its full sequence is NBPF family member NBPF6 (638 aa).

Coiled-coil stretches lie at residues 10–43 (SERAEMNILEINQELRSQLAESNQQFRDLKEKFL) and 69–115 (DSVL…KLRE). Positions 157-285 (HLVHKLSPEN…VPPRHHDKSN (129 aa)) are disordered. Residues 165-179 (ENDEDEDEDEDDKDE) are compositionally biased toward acidic residues. Residues 174–261 (EDDKDEEVEK…EEEEALNIPP (88 aa)) form the Olduvai 1 domain. Residues 192–202 (EVQKTEEKEVP) are compositionally biased toward basic and acidic residues. A compositionally biased stretch (low complexity) spans 214–226 (SNSHNPSNSNQPH). Composition is skewed to basic and acidic residues over residues 232–251 (TFKEHEVDSALVVESEHPHD) and 264–273 (QNDHEEEEGK). Olduvai domains follow at residues 326 to 399 (EKQS…ALVD) and 400 to 503 (KIKK…SQAQ). The disordered stretch occupies residues 563–584 (MKNPPQLEDDALEGSASNTQGR).

The protein belongs to the NBPF family.

The protein resides in the cytoplasm. This chain is NBPF family member NBPF6, found in Homo sapiens (Human).